Reading from the N-terminus, the 511-residue chain is Fusicocca-1,10(14)-diene-8beta,16-diol C-9 hydroxylase (511 aa).

A helical transmembrane segment spans residues 7-29 (TVAALAAVFVAGTLLSRLASWIR). Residues Asn-64, Asn-163, and Asn-343 are each glycosylated (N-linked (GlcNAc...) asparagine). Cys-450 provides a ligand contact to heme.

This sequence belongs to the cytochrome P450 family. It depends on heme as a cofactor.

It is found in the membrane. The protein operates within mycotoxin biosynthesis. In terms of biological role, cytochrome P450 monooxygenase; part of the 2 gene clusters that mediate the biosynthesis of fusicoccins, diterpene glucosides that display phytohormone-like activity and function as potent activators of plasma membrane H(+)-ATPases in plants by modifying 14-3-3 proteins and cause the plant disease constriction canker. The first step in the pathway is performed by the fusicoccadiene synthase PaFS that possesses both prenyl transferase and terpene cyclase activity, converting isopentenyl diphosphate and dimethylallyl diphosphate into geranylgeranyl diphosphate (GGDP) and successively converting GGDP into fusicocca-2,10(14)-diene, a precursor for fusicoccin H. The second step is the oxidation at the C-8 position by the cytochrome P450 monooxygenase PaP450-2 to yield fusicocca-2,10(14)-diene-8-beta-ol. The cytochrome P450 monooxygenase PaP450-1 then catalyzes the hydroxylation at the C-16 position to produce fusicocca-2,10(14)-diene-8-beta,16-diol. The dioxygenase fc-dox then catalyzes the 16-oxydation of fusicocca-2,10(14)-diene-8-beta,16-diol to yield an aldehyde (8-beta-hydroxyfusicocca-1,10(14)-dien-16-al). The short-chain dehydrogenase/reductase fc-sdr catalyzes the reduction of the aldehyde to yield fusicocca-1,10(14)-diene-8-beta,16-diol. The next step is the hydroxylation at C-9 performed by the cytochrome P450 monooxygenase PaP450-3 that leads to fusicoccin H aglycon which is glycosylated to fusicoccin H by the O-glycosyltransferase PaGT. Hydroxylation at C-12 by the cytochrome P450 monooxygenase PaP450-4 leads then to the production of fusicoccin Q and is followed by methylation by the O-methyltransferase PaMT to yield fusicoccin P. Fusicoccin P is further converted to fusicoccin J via prenylation by the O-glucose prenyltransferase PaPT. Cytochrome P450 monooxygenase PaP450-5 then performs hydroxylation at C-19 to yield dideacetyl-fusicoccin A which is acetylated to 3'-O-deacetyl-fusicoccin A by the O-acetyltransferase PaAT-2. Finally, a another acetylation by the O-acetyltransferase PaAT-1 yields fusicoccin A. This Phomopsis amygdali (Fusicoccum amygdali) protein is Fusicocca-1,10(14)-diene-8beta,16-diol C-9 hydroxylase.